The chain runs to 180 residues: Ribulose bisphosphate carboxylase small subunit 1A, chloroplastic (180 aa).

The transit peptide at 1 to 54 directs the protein to the chloroplast; sequence MASSMLSSATMVASPAQATMVAPFNGLKSSAAFPATRKANNDITSITSNGGRVN. Phosphoserine is present on Ser-113.

The protein belongs to the RuBisCO small chain family. In terms of assembly, heterohexadecamer of 8 large and 8 small subunits.

It is found in the plastid. It localises to the chloroplast membrane. Its subcellular location is the chloroplast stroma. In terms of biological role, ruBisCO catalyzes two reactions: the carboxylation of D-ribulose 1,5-bisphosphate, the primary event in carbon dioxide fixation, as well as the oxidative fragmentation of the pentose substrate. Both reactions occur simultaneously and in competition at the same active site. Although the small subunit is not catalytic it is essential for maximal activity. This is Ribulose bisphosphate carboxylase small subunit 1A, chloroplastic (RBCS-1A) from Arabidopsis thaliana (Mouse-ear cress).